The primary structure comprises 179 residues: ATP synthase subunit b (179 aa).

The helical transmembrane segment at 29–48 (VINLAILIGVLVYFGRGVLG) threads the bilayer.

Belongs to the ATPase B chain family. As to quaternary structure, F-type ATPases have 2 components, F(1) - the catalytic core - and F(0) - the membrane proton channel. F(1) has five subunits: alpha(3), beta(3), gamma(1), delta(1), epsilon(1). F(0) has four main subunits: a(1), b(1), b'(1) and c(10-14). The alpha and beta chains form an alternating ring which encloses part of the gamma chain. F(1) is attached to F(0) by a central stalk formed by the gamma and epsilon chains, while a peripheral stalk is formed by the delta, b and b' chains.

The protein resides in the cellular thylakoid membrane. Functionally, f(1)F(0) ATP synthase produces ATP from ADP in the presence of a proton or sodium gradient. F-type ATPases consist of two structural domains, F(1) containing the extramembraneous catalytic core and F(0) containing the membrane proton channel, linked together by a central stalk and a peripheral stalk. During catalysis, ATP synthesis in the catalytic domain of F(1) is coupled via a rotary mechanism of the central stalk subunits to proton translocation. Component of the F(0) channel, it forms part of the peripheral stalk, linking F(1) to F(0). Its function is as follows. The complex from the organism is particularly stable to disruption and remains functional after 6 hrs at 55 degrees Celsius. The sequence is that of ATP synthase subunit b from Thermosynechococcus vestitus (strain NIES-2133 / IAM M-273 / BP-1).